The chain runs to 91 residues: MARNVNCVYLNKEAPGLDFQLYPGDLGKRIFDNISKEAWGLWQQKQTMLINEKKLNMMNLEDRQFLEQQMINFLFEGKQVEIEGYVPPVED.

Belongs to the Fe(2+)-trafficking protein family.

In terms of biological role, could be a mediator in iron transactions between iron acquisition and iron-requiring processes, such as synthesis and/or repair of Fe-S clusters in biosynthetic enzymes. This chain is Probable Fe(2+)-trafficking protein, found in Shewanella denitrificans (strain OS217 / ATCC BAA-1090 / DSM 15013).